We begin with the raw amino-acid sequence, 377 residues long: Acetyltransferase ple2 (377 aa).

Positions 1-27 (MKPFSPELLVLSFILLVLSCAIRPAKG) are cleaved as a signal peptide. 4 helical membrane-spanning segments follow: residues 29–49 (WILW…TTGD), 56–76 (IANN…LTDV), 176–196 (IAAW…ALSL), and 258–278 (PALY…HAIG).

It belongs to the wax synthase family.

It is found in the membrane. Its pathway is secondary metabolite biosynthesis; terpenoid biosynthesis. Functionally, acetyltransferase; part of the gene cluster that mediates the biosynthesis of pleuromutilin, a tricyclic diterpene showing antibacterial properties. The geranylgeranyl diphosphate (GGPP) synthase ple4 catalyzes the first step in pleuromutilin biosynthesis. GGPP is then substrate of the premutilin synthase (PS) ple3 to yield premutilin. Premutilin synthase is a bifunctional enzyme composed of the fusion of a class II diterpene cyclase (DTC) and a class I diterpene synthase (DTS), with the corresponding domains and active sites containing characteristic aspartate-rich motifs. GGPP is first converted to mutildienyl-diphosphate (MPP) at the class II DTC site. MPP is subsequently further cyclized at the class I DTS site, followed by a 1,5-hydride shift and addition of water prior to terminating deprotonation, to yield premutilin. The cytochrome P450 monooxygenases ple5 and ple6 hydroxylate premutilin at C-11 and C-3, respectively, producing 11-hydroxypremutilin and 3-hydroxypremutilin. The combination of the actions of both ple5 and ple6 leads to the production of 3,11-dihydroxypremutilin. The short chain dehydrogenase ple7 further converts 3,11-dihydroxypremutilin into mutilin. The acetyltransferase ple2 then acetylates mutilin to produce 14-O-acetylmutilin. Finally, the cytochrome P450 monooxygenase ple1 catalyzes hydroxylation on the alpha position of the acetyl side chain of 14-O-acetylmutilin to yield pleuromutilin. In Rhodocybe pseudopiperita (Clitopilus pseudopiperitus), this protein is Acetyltransferase ple2.